The sequence spans 378 residues: Ribosomal RNA large subunit methyltransferase G (378 aa).

The protein belongs to the methyltransferase superfamily. RlmG family.

It localises to the cytoplasm. It carries out the reaction guanosine(1835) in 23S rRNA + S-adenosyl-L-methionine = N(2)-methylguanosine(1835) in 23S rRNA + S-adenosyl-L-homocysteine + H(+). In terms of biological role, specifically methylates the guanine in position 1835 (m2G1835) of 23S rRNA. This chain is Ribosomal RNA large subunit methyltransferase G, found in Salmonella heidelberg (strain SL476).